We begin with the raw amino-acid sequence, 283 residues long: MTTPSLQTTIEAAWESREGVTLETRGAVRDAVEAVLDGLDAGIYRVAEKIGETWVVHQWLKMAVLLSFRLNDMTPVSGAPGGATWWDKVPSKFAGWGEDRFRAAGFRAVPGAIVRRSAHIAPGVVLMPSFVNLGARVESGAMIDTWATVGSCAQIGRNVHLSGGAGIGGVLEPLQAGPVIIEDNCFIGARSEVAEGVLVETGAVLSMGVFIGASTRVIDRETGEVFMGRVPAYSVVVPGSLPGKPLPDGTPGPGLACAVIVKRVDERTRSKVSINDLLRDTPR.

The substrate site is built by Arg107 and Asp144.

Belongs to the transferase hexapeptide repeat family. As to quaternary structure, homotrimer.

The protein localises to the cytoplasm. It catalyses the reaction (S)-2,3,4,5-tetrahydrodipicolinate + succinyl-CoA + H2O = (S)-2-succinylamino-6-oxoheptanedioate + CoA. It participates in amino-acid biosynthesis; L-lysine biosynthesis via DAP pathway; LL-2,6-diaminopimelate from (S)-tetrahydrodipicolinate (succinylase route): step 1/3. This is 2,3,4,5-tetrahydropyridine-2,6-dicarboxylate N-succinyltransferase from Rhodospirillum rubrum (strain ATCC 11170 / ATH 1.1.1 / DSM 467 / LMG 4362 / NCIMB 8255 / S1).